The chain runs to 265 residues: Imidazole glycerol phosphate synthase subunit HisF (265 aa).

Catalysis depends on residues D11 and D130.

Belongs to the HisA/HisF family. In terms of assembly, heterodimer of HisH and HisF.

It is found in the cytoplasm. It catalyses the reaction 5-[(5-phospho-1-deoxy-D-ribulos-1-ylimino)methylamino]-1-(5-phospho-beta-D-ribosyl)imidazole-4-carboxamide + L-glutamine = D-erythro-1-(imidazol-4-yl)glycerol 3-phosphate + 5-amino-1-(5-phospho-beta-D-ribosyl)imidazole-4-carboxamide + L-glutamate + H(+). The protein operates within amino-acid biosynthesis; L-histidine biosynthesis; L-histidine from 5-phospho-alpha-D-ribose 1-diphosphate: step 5/9. Its function is as follows. IGPS catalyzes the conversion of PRFAR and glutamine to IGP, AICAR and glutamate. The HisF subunit catalyzes the cyclization activity that produces IGP and AICAR from PRFAR using the ammonia provided by the HisH subunit. In Idiomarina loihiensis (strain ATCC BAA-735 / DSM 15497 / L2-TR), this protein is Imidazole glycerol phosphate synthase subunit HisF.